The primary structure comprises 388 residues: Lysocardiolipin acyltransferase 1 (388 aa).

Helical transmembrane passes span 9–29 and 46–66; these read FLLF…GPLL and IVAT…GVKV. An HXXXXD motif motif is present at residues 85-90; it reads HRTRLD. 2 consecutive transmembrane segments (helical) span residues 321–341 and 342–362; these read IILV…CASL and CLCP…LCQQ.

The protein belongs to the 1-acyl-sn-glycerol-3-phosphate acyltransferase family.

It is found in the endoplasmic reticulum membrane. The catalysed reaction is a 1-acyl-sn-glycero-3-phosphate + an acyl-CoA = a 1,2-diacyl-sn-glycero-3-phosphate + CoA. It carries out the reaction a 1-acyl-sn-glycero-3-phospho-(1D-myo-inositol) + an acyl-CoA = a 1,2-diacyl-sn-glycero-3-phospho-(1D-myo-inositol) + CoA. The enzyme catalyses 1-acyl-sn-glycero-3-phospho-(1'-sn-glycerol) + an acyl-CoA = a 1,2-diacyl-sn-glycero-3-phospho-(1'-sn-glycerol) + CoA. It catalyses the reaction 1-hexadecanoyl-sn-glycero-3-phosphate + (9Z)-octadecenoyl-CoA = 1-hexadecanoyl-2-(9Z-octadecenoyl)-sn-glycero-3-phosphate + CoA. The catalysed reaction is 1-(9Z-octadecenoyl)-sn-glycero-3-phosphate + (9Z)-octadecenoyl-CoA = 1,2-di-(9Z-octadecenoyl)-sn-glycero-3-phosphate + CoA. It carries out the reaction 1-(9Z,12Z)-octadecadienoyl-sn-glycero-3-phosphate + (9Z)-octadecenoyl-CoA = 1-(9Z,12Z)-octadecadienoyl-2-(9Z)-octadecenoyl-sn-glycero-3-phosphate + CoA. The enzyme catalyses 1-(9Z,12Z,15Z)-octadecatrienoyl-sn-glycero-3-phosphate + (9Z)-octadecenoyl-CoA = 1-(9Z,12Z,15Z)-octadecatrienoyl-2-(9Z)-octadecenoyl-sn-glycero-3-phosphate + CoA. It catalyses the reaction 1-(9Z-octadecenoyl)-sn-glycero-3-phosphate + hexadecanoyl-CoA = 1-(9Z)-octadecenoyl-2-hexadecanoyl-sn-glycero-3-phosphate + CoA. The catalysed reaction is 1-(9Z-octadecenoyl)-sn-glycero-3-phosphate + octadecanoyl-CoA = 1-(9Z-octadecenoyl)-2-octadecanoyl-sn-glycero-3-phosphate + CoA. It carries out the reaction 1-acyl-sn-glycero-3-phospho-(1'-sn-glycerol) + (9Z)-octadecenoyl-CoA = 1-acyl-2-(9Z-octadecenoyl)-sn-glycero-3-phospho-(1'-sn-glycerol) + CoA. The enzyme catalyses a 1-acyl-sn-glycero-3-phospho-(1D-myo-inositol) + (9Z)-octadecenoyl-CoA = a 1-acyl-2-(9Z-octadecenoyl)-sn-glycero-3-phospho-(1D-myo-inositol) + CoA. It catalyses the reaction 1-hexadecanoyl-sn-glycero-3-phospho-(1D-myo-inositol) + hexadecanoyl-CoA = 1,2-dihexadecanoyl-sn-glycero-3-phospho-(1D-myo-inositol) + CoA. The catalysed reaction is 1-hexadecanoyl-sn-glycero-3-phospho-(1D-myo-inositol) + octadecanoyl-CoA = 1-hexadecanoyl-2-octadecanoyl-sn-glycero-3-phospho-(1D-myo-inositol) + CoA. It carries out the reaction 1-hexadecanoyl-sn-glycero-3-phospho-(1D-myo-inositol) + (9Z)-octadecenoyl-CoA = 1-hexadecanoyl-2-(9Z-octadecenoyl)-sn-glycero-3-phospho-(1D-myo-inositol) + CoA. The enzyme catalyses 1-hexadecanoyl-sn-glycero-3-phospho-(1D-myo-inositol) + (9Z,12Z)-octadecadienoyl-CoA = 1-hexadecanoyl-2-(9Z,12Z-octadecadienoyl)-sn-glycero-3-phospho-(1D-myo-inositol) + CoA. It catalyses the reaction 1-hexadecanoyl-sn-glycero-3-phospho-(1D-myo-inositol) + (5Z,8Z,11Z,14Z)-eicosatetraenoyl-CoA = 1-hexadecanoyl-2-(5Z,8Z,11Z,14Z-eicosatetraenoyl)-sn-glycero-3-phospho-D-myo-inositol + CoA. The catalysed reaction is 1-hexadecanoyl-sn-glycero-3-phospho-(1'-sn-glycerol) + hexadecanoyl-CoA = 1,2-dihexadecanoyl-sn-glycero-3-phospho-(1'-sn-glycerol) + CoA. It carries out the reaction 1-hexadecanoyl-sn-glycero-3-phospho-(1'-sn-glycerol) + octadecanoyl-CoA = 1-hexadecanoyl-2-octadecanoyl-sn-glycero-3-phospho-(1'-sn-glycerol) + CoA. The enzyme catalyses 1-hexadecanoyl-sn-glycero-3-phospho-(1'-sn-glycerol) + (9Z)-octadecenoyl-CoA = 1-hexadecanoyl-2-(9Z-octadecenoyl)-sn-glycero-3-phospho-(1'-sn-glycerol) + CoA. It catalyses the reaction 1-hexadecanoyl-sn-glycero-3-phospho-(1'-sn-glycerol) + (9Z,12Z)-octadecadienoyl-CoA = 1-hexadecanoyl-2-(9Z,12Z-octadecadienoyl)-sn-glycero-3-phospho-(1'-sn-glycerol) + CoA. The catalysed reaction is 1-tetradecanoyl-sn-glycero-3-phospho-(1'-sn-glycerol) + (9Z)-octadecenoyl-CoA = 1-tetradecanoyl-2-(9Z-octadecenoyl)-sn-glycero-3-phospho-(1'-sn-glycerol) + CoA. It carries out the reaction 1-octadecanoyl-sn-glycero-3-phospho-(1'-sn-glycerol) + (9Z)-octadecenoyl-CoA = 1-octadecanoyl-2-(9Z-octadecenoyl)-sn-glycero-3-phospho-(1'-sn-glycerol) + CoA. The enzyme catalyses 1-(9Z-octadecenoyl)-sn-glycero-3-phospho-(1'-sn-glycerol) + (9Z)-octadecenoyl-CoA = 1,2-di-(9Z-octadecenoyl)-sn-glycero-3-phospho-(1'-sn-glycerol) + CoA. It catalyses the reaction 1-hexadecanoyl-sn-glycero-3-phospho-(1D-myo-inositol) + dodecanoyl-CoA = 1-hexadecanoyl-2-dodecanoyl-sn-glycero-3-phospho-(1D-myo-inositol) + CoA. The catalysed reaction is 1',3'-bis-[1-acyl-sn-glycero-3-phospho]-glycerol + (9Z)-octadecenoyl-CoA = 1'-[1-acyl-2-(9Z)-octadecenoyl-sn-glycero-3-phospho],3'-[1-acyl,2-hydroxy-sn-glycero-3-phospho]-glycerol + CoA. It carries out the reaction 1'-[1,2-diacyl-sn-glycero-3-phospho],3'-[1-acyl-sn-glycero-3-phospho]-glycerol + (9Z)-octadecenoyl-CoA = 1'-[1,2-diacyl-sn-glycero-3-phospho],3'-[1-acyl,2-(9Z)-octadecenoyl-sn-glycero-3-phospho]-glycerol + CoA. The enzyme catalyses 1'-[1,2-diacyl-sn-glycero-3-phospho],3'-[1-acyl-sn-glycero-3-phospho]-glycerol + (9Z,12Z)-octadecadienoyl-CoA = 1'-[1,2-diacyl-sn-glycero-3-phospho],3'-[1-acyl,2-(9Z,12Z)-octadecadienoyl-sn-glycero-3-phospho]-glycerol + CoA. It catalyses the reaction 1'-[1,2-diacyl-sn-glycero-3-phospho],3'-[1-acyl-sn-glycero-3-phospho]-glycerol + dodecanoyl-CoA = 1'-[1,2-diacyl-sn-glycero-3-phospho],3'-[1-acyl,2-dodecanoyl-sn-glycero-3-phospho]-glycerol + CoA. The catalysed reaction is 1',3'-bis-[1-acyl-sn-glycero-3-phospho]-glycerol + dodecanoyl-CoA = 1'-[1-acyl-2-dodecanoyl-sn-glycero-3-phospho],3'-[1-acyl,2-hydroxy-sn-glycero-3-phospho]-glycerol + CoA. It carries out the reaction a 1-acyl-sn-glycero-3-phosphate + (9Z)-octadecenoyl-CoA = a 1-acyl-2-(9Z-octadecenoyl)-sn-glycero-3-phosphate + CoA. The enzyme catalyses 1',3'-bis-[1-acyl-sn-glycero-3-phospho]-glycerol + (9Z,12Z)-octadecadienoyl-CoA = 1'-[1-acyl-2-(9Z,12Z)-octadecadienoyl-sn-glycero-3-phospho],3'-[1-acyl,2-hydroxy-sn-glycero-3-phospho]-glycerol + CoA. It catalyses the reaction 1',3'-bis-[1-acyl-sn-glycero-3-phospho]-glycerol + hexadecanoyl-CoA = 1'-[1-acyl-2-hexadecanoyl-sn-glycero-3-phospho],3'-[1-acyl,2-hydroxy-sn-glycero-3-phospho]-glycerol + CoA. The catalysed reaction is 1',3'-bis-[1-acyl-sn-glycero-3-phospho]-glycerol + octadecanoyl-CoA = 1'-[1-acyl-2-octadecanoyl-sn-glycero-3-phospho],3'-[1-acyl,2-hydroxy-sn-glycero-3-phospho]-glycerol + CoA. It carries out the reaction 1'-[1,2-diacyl-sn-glycero-3-phospho],3'-[1-acyl-sn-glycero-3-phospho]-glycerol + octanoyl-CoA = 1'-[1,2-diacyl-sn-glycero-3-phospho],3'-[1-acyl,2-octanoyl-sn-glycero-3-phospho]-glycerol + CoA. The enzyme catalyses 1',3'-bis-[1-acyl-sn-glycero-3-phospho]-glycerol + octanoyl-CoA = 1'-[1-acyl-2-octanoyl-sn-glycero-3-phospho],3'-[1-acyl,2-hydroxy-sn-glycero-3-phospho]-glycerol + CoA. It catalyses the reaction 1'-[1,2-diacyl-sn-glycero-3-phospho],3'-[1-acyl-sn-glycero-3-phospho]-glycerol + hexadecanoyl-CoA = 1'-[1,2-diacyl-sn-glycero-3-phospho],3'-[1-acyl,2-hexadecanoyl-sn-glycero-3-phospho]-glycerol + CoA. The catalysed reaction is 1'-[1,2-diacyl-sn-glycero-3-phospho],3'-[1-acyl-sn-glycero-3-phospho]-glycerol + (5Z,8Z,11Z,14Z)-eicosatetraenoyl-CoA = 1'-[1,2-diacyl-sn-glycero-3-phospho],3'-[1-acyl,2-(5Z,8Z,11Z,14Z)-eicosatetraenoyl-sn-glycero-3-phospho]-glycerol + CoA. It carries out the reaction 1',3'-bis-[1-acyl-sn-glycero-3-phospho]-glycerol + (5Z,8Z,11Z,14Z)-eicosatetraenoyl-CoA = 1'-[1-acyl-2-(5Z,8Z,11Z,14Z)-eicosatetraenoyl-sn-glycero-3-phospho],3'-[1-acyl,2-hydroxy-sn-glycero-3-phospho]-glycerol + CoA. The enzyme catalyses a 1-acyl-sn-glycero-3-phospho-(1D-myo-inositol) + octadecanoyl-CoA = a 1-acyl-2-octadecanoyl-sn-glycero-3-phospho-(1D-myo-inositol) + CoA. It catalyses the reaction a 2-acyl-sn-glycero-3-phospho-D-myo-inositol + octadecanoyl-CoA = 1-octadecanoyl-2-acyl-sn-glycero-3-phospho-1D-myo-inositol + CoA. It functions in the pathway phospholipid metabolism; CDP-diacylglycerol biosynthesis; CDP-diacylglycerol from sn-glycerol 3-phosphate: step 2/3. In terms of biological role, exhibits acyl-CoA:lysocardiolipin acyltransferase (ALCAT) activity; catalyzes the reacylation of lyso-cardiolipin to cardiolipin (CL), a key step in CL remodeling. Recognizes both monolysocardiolipin and dilysocardiolipin as substrates with a preference for linoleoyl-CoA and oleoyl-CoA as acyl donors. Also exhibits 1-acyl-sn-glycerol-3-phosphate acyltransferase activity (AGPAT) activity; converts 1-acyl-sn-glycerol-3- phosphate (lysophosphatidic acid or LPA) into 1,2-diacyl-sn-glycerol-3- phosphate (phosphatidic acid or PA) by incorporating an acyl moiety at the sn-2 position of the glycerol backbone. Possesses both lysophosphatidylinositol acyltransferase (LPIAT) and lysophosphatidylglycerol acyltransferase (LPGAT) activities. Required for establishment of the hematopoietic and endothelial lineages. This Danio rerio (Zebrafish) protein is Lysocardiolipin acyltransferase 1 (lclat1).